A 717-amino-acid polypeptide reads, in one-letter code: MKNASRIFKGPLIWILLCIGLIIVFLQFAGSGNGYKDIPTSEAVSIINSSKKLDSVTLTDGDQVIKITENENKKYRSYWVGNQSDQLVDRLNDRVKAKTLKSWQGENPGQSIWKALLINFLPFVIILLFFLWAMNAAQGMGGRGGVMGFGKSKAKVGSKDTPKSTFADVAGCQEAIDELQEIREFLAEPAKFQRVGAKIPKGVLLYGPPGTGKTLLARAVAGEAGVPFFSISGSDFVEMFVGVGASRVRDLFEQAKEAAPAIIFIDEIDAVGRHRGAGMGGGHDEREQTLNQLLVEMDGFDVHGGVILIAATNRPDVLDPALLRPGRFDRQIAVEAPDLDGRLKILKVHAHGKPMADDVDLASIARRTPGMTGADLANVLNEAALLTARANLPVIGNSELDEAIDRVIAGPQKKTRLMNQHERLVTAYHEGGHALVAAAMPGTDPVQKITILPRGRALGYTMVMPDSDKYSQTRSELLDSMAYMMGGRAAEELIFHDPSTGASNDIEKATKVARALVTQYGLSARVGTVQLGSGDTEPFLGMTAGQQRDYSDETAKIIDDEVRELLENAHQEAFDCLDANREVLDELVRQLFARETLSKAEVADIFKPLKRWPERGAFTGSDKRVPSSIPPVKPPQIAGVDEDAPEVGAPRRGVIAPPTPEPGGDLPGDNPGEWEPPSDWQPPSVGGGKSPEPPSPTHPGEGPQPPSNGNPWGPPRS.

At 1-9 the chain is on the cytoplasmic side; that stretch reads MKNASRIFK. A helical membrane pass occupies residues 10–30; sequence GPLIWILLCIGLIIVFLQFAG. Topologically, residues 31-111 are extracellular; that stretch reads SGNGYKDIPT…SWQGENPGQS (81 aa). The helical transmembrane segment at 112-132 threads the bilayer; that stretch reads IWKALLINFLPFVIILLFFLW. Over 133–717 the chain is Cytoplasmic; sequence AMNAAQGMGG…NGNPWGPPRS (585 aa). ATP is bound at residue 207-214; the sequence is GPPGTGKT. Position 429 (His-429) interacts with Zn(2+). The active site involves Glu-430. The Zn(2+) site is built by His-433 and Asp-505. The segment at 617–717 is disordered; it reads AFTGSDKRVP…NGNPWGPPRS (101 aa). Over residues 691 to 717 the composition is skewed to pro residues; it reads PEPPSPTHPGEGPQPPSNGNPWGPPRS.

The protein in the central section; belongs to the AAA ATPase family. In the C-terminal section; belongs to the peptidase M41 family. Homohexamer. Requires Zn(2+) as cofactor.

It localises to the cell membrane. Functionally, acts as a processive, ATP-dependent zinc metallopeptidase for both cytoplasmic and membrane proteins. Plays a role in the quality control of integral membrane proteins. This Cutibacterium acnes (strain SK137) (Propionibacterium acnes) protein is ATP-dependent zinc metalloprotease FtsH.